The following is a 131-amino-acid chain: MAFSKSLVFVLLAALLISSAVAQSPAPAPSNVGGRRISPAPSPKKMTAPAPAPEVSPSPSPAAALTPESSASPPSPPLADSPTADSPALSPSAISDSPTEAPGPAQGGAVSNKFASFGSVAVMLTAAVLVI.

An N-terminal signal peptide occupies residues 1–22 (MAFSKSLVFVLLAALLISSAVA). A disordered region spans residues 22–110 (AQSPAPAPSN…APGPAQGGAV (89 aa)). Over residues 50–60 (APAPEVSPSPS) the composition is skewed to pro residues. Residues 61-72 (PAAALTPESSAS) show a composition bias toward low complexity. A lipid anchor (GPI-anchor amidated glycine) is attached at Gly108. Residues 109–131 (AVSNKFASFGSVAVMLTAAVLVI) constitute a propeptide, removed in mature form.

It belongs to the classical AGP family. Post-translationally, O-glycosylated on the hydroxyproline residues. In terms of tissue distribution, predominantly expressed in flowers and at a lower level in roots and leaves.

It localises to the cell membrane. Proteoglycan that seems to be implicated in diverse developmental roles such as differentiation, cell-cell recognition, embryogenesis and programmed cell death. The chain is Classical arabinogalactan protein 1 (AGP1) from Arabidopsis thaliana (Mouse-ear cress).